Here is a 95-residue protein sequence, read N- to C-terminus: Protein TusB (95 aa).

This sequence belongs to the DsrH/TusB family. As to quaternary structure, heterohexamer, formed by a dimer of trimers. The hexameric TusBCD complex contains 2 copies each of TusB, TusC and TusD. The TusBCD complex interacts with TusE.

The protein resides in the cytoplasm. Part of a sulfur-relay system required for 2-thiolation of 5-methylaminomethyl-2-thiouridine (mnm(5)s(2)U) at tRNA wobble positions. This Buchnera aphidicola subsp. Schizaphis graminum (strain Sg) protein is Protein TusB.